Consider the following 270-residue polypeptide: Endonuclease 4 (270 aa).

Positions 69, 108, 139, 169, 172, 204, 217, 219, and 248 each coordinate Zn(2+).

The protein belongs to the AP endonuclease 2 family. Requires Zn(2+) as cofactor.

The catalysed reaction is Endonucleolytic cleavage to 5'-phosphooligonucleotide end-products.. Functionally, endonuclease IV plays a role in DNA repair. It cleaves phosphodiester bonds at apurinic or apyrimidinic (AP) sites, generating a 3'-hydroxyl group and a 5'-terminal sugar phosphate. In addition, possesses a 3'-5' exonuclease activity. The protein is Endonuclease 4 of Thermus thermophilus (strain ATCC BAA-163 / DSM 7039 / HB27).